The sequence spans 135 residues: MISIGTDLVHISAFAEQLAQPGSSFMEVFSAGERRKANERQASRYAEHLAGRWAAKESFIKAWSQAIYGQPPVIAEEAVVWRDIEVRADAWGRVAIELAPELAAVVRESIGEFSSSLSISHDGDYAVATCVLTIQ.

Aspartate 7 and glutamate 57 together coordinate Mg(2+).

Belongs to the P-Pant transferase superfamily. AcpS family. Mg(2+) is required as a cofactor.

It is found in the cytoplasm. It catalyses the reaction apo-[ACP] + CoA = holo-[ACP] + adenosine 3',5'-bisphosphate + H(+). In terms of biological role, transfers the 4'-phosphopantetheine moiety from coenzyme A to a Ser of acyl-carrier-protein. This chain is Holo-[acyl-carrier-protein] synthase, found in Corynebacterium glutamicum (strain ATCC 13032 / DSM 20300 / JCM 1318 / BCRC 11384 / CCUG 27702 / LMG 3730 / NBRC 12168 / NCIMB 10025 / NRRL B-2784 / 534).